The following is a 467-amino-acid chain: 3-isopropylmalate dehydratase large subunit (467 aa).

[4Fe-4S] cluster is bound by residues cysteine 349, cysteine 408, and cysteine 411.

It belongs to the aconitase/IPM isomerase family. LeuC type 1 subfamily. In terms of assembly, heterodimer of LeuC and LeuD. Requires [4Fe-4S] cluster as cofactor.

It carries out the reaction (2R,3S)-3-isopropylmalate = (2S)-2-isopropylmalate. It participates in amino-acid biosynthesis; L-leucine biosynthesis; L-leucine from 3-methyl-2-oxobutanoate: step 2/4. Functionally, catalyzes the isomerization between 2-isopropylmalate and 3-isopropylmalate, via the formation of 2-isopropylmaleate. In Dinoroseobacter shibae (strain DSM 16493 / NCIMB 14021 / DFL 12), this protein is 3-isopropylmalate dehydratase large subunit.